The following is a 207-amino-acid chain: ADP-ribose pyrophosphatase (207 aa).

Substrate contacts are provided by residues 37–38 and Arg-64; that span reads RE. A Nudix hydrolase domain is found at 41–172; that stretch reads EHFGAVAIVA…EIVNSIAIAG (132 aa). Ala-76 contacts Mg(2+). The Nudix box signature appears at 77–99; it reads GLLDVAGEPPHLTAARELREEVG. A substrate-binding site is contributed by Leu-78. Mg(2+) is bound by residues Glu-93 and Glu-97. Substrate is bound by residues 114–116 and Glu-120; that span reads APG. Residue Glu-142 coordinates Mg(2+). Residue Glu-142 is the Proton acceptor of the active site.

The protein belongs to the Nudix hydrolase family. In terms of assembly, homodimer. It depends on Mg(2+) as a cofactor. Mn(2+) serves as cofactor.

It catalyses the reaction ADP-D-ribose + H2O = D-ribose 5-phosphate + AMP + 2 H(+). The catalysed reaction is 8-oxo-dGDP + H2O = 8-oxo-dGMP + phosphate + H(+). It carries out the reaction 8-oxo-GDP + H2O = 8-oxo-GMP + phosphate + H(+). Its function is as follows. Catalyzes the hydrolysis of ADP-ribose (ADPR) to AMP and ribose-5-phosphate. Can also hydrolyze ADP-mannose and ADP-glucose, with lower efficiency. Has weaker activity with NAD, GDP-sugars and UDP-sugars. Also catalyzes the conversion of 8-oxo-dGDP to 8-oxo-dGMP, and 8-oxo-GDP to 8-oxo-GMP. Functions in concert with MutT1 to detoxify 8-oxo-dGTP to 8-oxo-dGMP and may play an important role in supporting cellular growth under oxidative stress. The catalytic efficiency is much higher for the hydrolysis of ADPR than 8-oxo-dGTP, suggesting a more relevant biological role in hydrolysis of ADPR. The chain is ADP-ribose pyrophosphatase from Mycobacterium tuberculosis (strain ATCC 25618 / H37Rv).